Here is a 713-residue protein sequence, read N- to C-terminus: Ribosomal RNA large subunit methyltransferase K/L (713 aa).

The THUMP domain maps to 46-157 (TAYRICLWSR…RDQATLSLDL (112 aa)).

The protein belongs to the methyltransferase superfamily. RlmKL family.

The protein resides in the cytoplasm. The catalysed reaction is guanosine(2445) in 23S rRNA + S-adenosyl-L-methionine = N(2)-methylguanosine(2445) in 23S rRNA + S-adenosyl-L-homocysteine + H(+). It carries out the reaction guanosine(2069) in 23S rRNA + S-adenosyl-L-methionine = N(2)-methylguanosine(2069) in 23S rRNA + S-adenosyl-L-homocysteine + H(+). In terms of biological role, specifically methylates the guanine in position 2445 (m2G2445) and the guanine in position 2069 (m7G2069) of 23S rRNA. The sequence is that of Ribosomal RNA large subunit methyltransferase K/L from Syntrophotalea carbinolica (strain DSM 2380 / NBRC 103641 / GraBd1) (Pelobacter carbinolicus).